A 212-amino-acid polypeptide reads, in one-letter code: MYRLSSSMLPRALAQAMRTGHLNGQSLHSSAVAATYKYVNKKEQESEVDMKSATDNAARILMWTELIRGLGMTLSYLFREPATINYPFEKGPLSPRFRGEHALRRYPSGEERCIACKLCEAICPAQAITIEAEPRADGSRRTTRYDIDMTKCIYCGFCQEACPVDAIVEGPNFEFSTETHEELLYNKEKLLNNGDKWEAEIAANIQADYLYR.

The transit peptide at 1 to 34 (MYRLSSSMLPRALAQAMRTGHLNGQSLHSSAVAA) directs the protein to the mitochondrion. 2 4Fe-4S ferredoxin-type domains span residues 104-133 (RRYP…IEAE) and 143-172 (TRYD…EGPN). [4Fe-4S] cluster contacts are provided by C113, C116, C119, C123, C152, C155, C158, and C162.

This sequence belongs to the complex I 23 kDa subunit family. As to quaternary structure, complex I is composed of 45 different subunits. This is a component of the iron-sulfur (IP) fragment of the enzyme. Interacts with RAB5IF. [4Fe-4S] cluster is required as a cofactor.

The protein resides in the mitochondrion inner membrane. It carries out the reaction a ubiquinone + NADH + 5 H(+)(in) = a ubiquinol + NAD(+) + 4 H(+)(out). Functionally, core subunit of the mitochondrial membrane respiratory chain NADH dehydrogenase (Complex I) which catalyzes electron transfer from NADH through the respiratory chain, using ubiquinone as an electron acceptor. Essential for the catalytic activity and assembly of complex I. This is NADH dehydrogenase [ubiquinone] iron-sulfur protein 8, mitochondrial (Ndufs8) from Mus musculus (Mouse).